Reading from the N-terminus, the 301-residue chain is Aspartate carbamoyltransferase catalytic subunit (301 aa).

Carbamoyl phosphate contacts are provided by Arg54 and Thr55. Lys82 contacts L-aspartate. Positions 104, 132, and 135 each coordinate carbamoyl phosphate. L-aspartate is bound by residues Arg165 and Arg217. Residues Gly257 and Pro258 each coordinate carbamoyl phosphate.

Belongs to the aspartate/ornithine carbamoyltransferase superfamily. ATCase family. Heterododecamer (2C3:3R2) of six catalytic PyrB chains organized as two trimers (C3), and six regulatory PyrI chains organized as three dimers (R2).

It carries out the reaction carbamoyl phosphate + L-aspartate = N-carbamoyl-L-aspartate + phosphate + H(+). It functions in the pathway pyrimidine metabolism; UMP biosynthesis via de novo pathway; (S)-dihydroorotate from bicarbonate: step 2/3. In terms of biological role, catalyzes the condensation of carbamoyl phosphate and aspartate to form carbamoyl aspartate and inorganic phosphate, the committed step in the de novo pyrimidine nucleotide biosynthesis pathway. In Thermus aquaticus, this protein is Aspartate carbamoyltransferase catalytic subunit.